The primary structure comprises 367 residues: CCN family member 4 (367 aa).

An N-terminal signal peptide occupies residues 1–22 (MRWLLPWTLAAVAVLRVGNILA). The IGFBP N-terminal domain occupies 45-118 (RPEFCKWPCE…RYAIGVCAQV (74 aa)). Cystine bridges form between Cys-49–Cys-73, Cys-53–Cys-75, Cys-55–Cys-76, and Cys-62–Cys-79. Residue Asn-86 is glycosylated (N-linked (GlcNAc...) asparagine). Disulfide bonds link Cys-87–Cys-101 and Cys-93–Cys-115. The region spanning 121-186 (VGCVLDGVRY…GQCCEQWVCD (66 aa)) is the VWFC domain. A glycan (N-linked (GlcNAc...) asparagine) is linked at Asn-143. Residues 215 to 260 (NCIAYTSPWSPCSTTCGLGISTRISNVNARCWPEQESRLCNLRPCD) enclose the TSP type-1 domain. Intrachain disulfides connect Cys-273/Cys-310, Cys-290/Cys-324, Cys-301/Cys-340, Cys-304/Cys-342, and Cys-309/Cys-346. Positions 273-347 (CLAVYQPEEA…NACFCNLSCR (75 aa)) constitute a CTCK domain. N-linked (GlcNAc...) asparagine glycosylation occurs at Asn-284. An N-linked (GlcNAc...) asparagine glycan is attached at Asn-343.

It belongs to the CCN family. As to expression, highly expressed in kidney and lung. Lower levels in heart, brain, spleen, liver, skeletal muscle and testis. Expressed in low metastatic melanoma cells.

The protein resides in the secreted. In terms of biological role, downstream regulator in the Wnt/Frizzled-signaling pathway. Associated with cell survival. Adheres to skin and melanoma fibroblasts. In vitro binding to skin fibroblasts occurs through the proteoglycans, decorin and biglycan. Suppresses tumor growth in vivo. This is CCN family member 4 (Ccn4) from Mus musculus (Mouse).